We begin with the raw amino-acid sequence, 331 residues long: Probable inactive O-methyltransferase 11 (331 aa).

Residues glycine 179, aspartate 202, glycine 224–phenylalanine 226, aspartate 225, phenylalanine 226, and lysine 239 each bind S-adenosyl-L-methionine.

It belongs to the class I-like SAM-binding methyltransferase superfamily. Cation-independent O-methyltransferase family. COMT subfamily.

The sequence is that of Probable inactive O-methyltransferase 11 (omt11) from Dictyostelium discoideum (Social amoeba).